The chain runs to 338 residues: 1-aminocyclopropane-1-carboxylate deaminase (338 aa).

Position 51 is an N6-(pyridoxal phosphate)lysine (Lys51). The active-site Nucleophile is Ser78.

It belongs to the ACC deaminase/D-cysteine desulfhydrase family. Homotrimer. Pyridoxal 5'-phosphate is required as a cofactor.

It carries out the reaction 1-aminocyclopropane-1-carboxylate + H2O = 2-oxobutanoate + NH4(+). Its function is as follows. Catalyzes a cyclopropane ring-opening reaction, the irreversible conversion of 1-aminocyclopropane-1-carboxylate (ACC) to ammonia and alpha-ketobutyrate. Allows growth on ACC as a nitrogen source. The sequence is that of 1-aminocyclopropane-1-carboxylate deaminase from Burkholderia lata (strain ATCC 17760 / DSM 23089 / LMG 22485 / NCIMB 9086 / R18194 / 383).